Reading from the N-terminus, the 278-residue chain is Short-chain dehydrogenase/reductase eupG (278 aa).

Residues L19, D71, and N98 each coordinate NADP(+). S155 serves as the catalytic Proton donor. Residues Y188, K192, and T223 each contribute to the NADP(+) site. Y188 acts as the Proton acceptor in catalysis. K192 acts as the Lowers pKa of active site Tyr in catalysis.

Belongs to the short-chain dehydrogenases/reductases (SDR) family.

It participates in secondary metabolite biosynthesis; terpenoid biosynthesis. Its function is as follows. Short-chain dehydrogenase/reductase; part of the gene cluster that mediates the biosynthesis of eupenifeldin, a bistropolone meroterpenoid that acts as an antitumor agent. The first step of eupenifeldin biosynthesis is the biosynthesis of 3-methylorcinaldehyde performed by the non-reducing polyketide synthase eupA. Oxidative dearomatization of 3-methylorcinaldehyde likely catalyzed by the FAD-dependent monooxygenase eupB is followed by oxidative ring expansion by the 2-oxoglutarate-dependent dioxygenase eupC to provide the first tropolone metabolite, tropolone stipitaldehyde. In parallel, generation of sesquiterpene alpha-humulene from farnesylpyrophosphate (FPP) is catalyzed by the terpene cyclase eupE. The cytochrome P450 monooxygenase eupD then hydroxylates humulene to humulenol. The putative Diels-Alderase eupF probably catalyzes the formation of the tropolone-humulene skeleton by linking humulenol and the polyketide moiety. The short-chain dehydrogenase/reductase eupG and the flavin-dependent monooxygenase eupH are also essential for eupenifeldin biosynthesis and are likely the additional decorating enzymes of the tropolone-humulene skeleton to produce final eupenifeldin or derivatives. This chain is Short-chain dehydrogenase/reductase eupG, found in Phoma sp.